A 217-amino-acid polypeptide reads, in one-letter code: Insulin-like growth factor 2.L (217 aa).

A signal peptide spans 1–56 (MEQLSCKHRSSSMEAEAQLCRQTESRSTQLPRMSVMRHLFLLSITFLVYTLDSAKA). The tract at residues 57 to 83 (YRPTETLCGGELVDTLQFVCGDRGFYF) is b. Intrachain disulfides connect Cys-64–Cys-103, Cys-76–Cys-116, and Cys-102–Cys-107. Residues 84 to 96 (STNNGRSNRRSNR) are c. The a stretch occupies residues 97-117 (GIVEECCFRSCDLELLETYCA). Positions 118–123 (KPSKNE) are d. A propeptide spans 124-217 (RDVSTAPATA…LQQTSEPSHN (94 aa)) (e peptide).

This sequence belongs to the insulin family.

The protein localises to the secreted. Its function is as follows. The insulin-like growth factors, isolated from plasma, are structurally and functionally related to insulin but have a much higher growth-promoting activity. Promotes anterior neural development. Acts as a ligand for integrin which is required for IGF2 signaling. The chain is Insulin-like growth factor 2.L from Xenopus laevis (African clawed frog).